Here is a 641-residue protein sequence, read N- to C-terminus: Sodium-dependent nutrient amino acid transporter 1 (641 aa).

A compositionally biased stretch (polar residues) spans 1–21 (MELKNIEQQPQLQNGNGTATE). The interval 1 to 37 (MELKNIEQQPQLQNGNGTATENNEKGEQKPTEGGERT) is disordered. Residues 1 to 38 (MELKNIEQQPQLQNGNGTATENNEKGEQKPTEGGERTN) lie on the Cytoplasmic side of the membrane. The segment covering 22–35 (NNEKGEQKPTEGGE) has biased composition (basic and acidic residues). The next 3 helical transmembrane spans lie at 39 to 59 (WGNG…LGNV), 72 to 92 (GAFL…MYYL), and 125 to 145 (TVCI…YLFV). Residues Asn-181, Asn-190, and Asn-198 are each glycosylated (N-linked (GlcNAc...) asparagine). 9 consecutive transmembrane segments (helical) span residues 229–249 (PDWK…LVIM), 258–278 (AAYF…GRAV), 307–327 (AVVQ…MFAS), 341–361 (IVTT…FAIL), 401–421 (LFSV…IVAL), 441–461 (VALV…TPGG), 474–494 (TYVV…IYGL), 516–536 (CWSF…MATI), and 552–572 (IAGW…GIWY).

This sequence belongs to the sodium:neurotransmitter symporter (SNF) (TC 2.A.22) family.

The protein resides in the membrane. Functionally, unusual broad substrate spectrum amino acid:sodium cotransporter that promotes absorption of the D isomers of essential amino acids. Neutral amino acids are the preferred substrates, especially methionine and phenylalanine. This Drosophila willistoni (Fruit fly) protein is Sodium-dependent nutrient amino acid transporter 1.